Consider the following 392-residue polypeptide: Formate-dependent phosphoribosylglycinamide formyltransferase (392 aa).

Residues 20 to 21 (EL) and Glu-80 each bind N(1)-(5-phospho-beta-D-ribosyl)glycinamide. Residues Arg-112, Lys-153, 158–163 (SSGKGQ), 193–196 (EGFI), and Glu-201 each bind ATP. The region spanning 117–306 (RLAAETLALP…EFALHVRAIL (190 aa)) is the ATP-grasp domain. Positions 265 and 277 each coordinate Mg(2+). N(1)-(5-phospho-beta-D-ribosyl)glycinamide contacts are provided by residues Asp-284, Lys-354, and 361 to 362 (RR).

It belongs to the PurK/PurT family. In terms of assembly, homodimer.

The enzyme catalyses N(1)-(5-phospho-beta-D-ribosyl)glycinamide + formate + ATP = N(2)-formyl-N(1)-(5-phospho-beta-D-ribosyl)glycinamide + ADP + phosphate + H(+). It participates in purine metabolism; IMP biosynthesis via de novo pathway; N(2)-formyl-N(1)-(5-phospho-D-ribosyl)glycinamide from N(1)-(5-phospho-D-ribosyl)glycinamide (formate route): step 1/1. Its function is as follows. Involved in the de novo purine biosynthesis. Catalyzes the transfer of formate to 5-phospho-ribosyl-glycinamide (GAR), producing 5-phospho-ribosyl-N-formylglycinamide (FGAR). Formate is provided by PurU via hydrolysis of 10-formyl-tetrahydrofolate. The chain is Formate-dependent phosphoribosylglycinamide formyltransferase from Shewanella amazonensis (strain ATCC BAA-1098 / SB2B).